The chain runs to 283 residues: Short-chain dehydrogenase anuB (283 aa).

NADP(+) is bound by residues Thr-57, Asp-78, Asn-106, Tyr-166, Lys-170, Val-199, and Thr-201. The active-site Proton acceptor is the Tyr-166. Tyr-166 acts as the Proton donor in catalysis. The active-site Lowers pKa of active site Tyr is the Lys-170.

Belongs to the short-chain dehydrogenases/reductases (SDR) family.

Its pathway is secondary metabolite biosynthesis. Highly reducing polyketide synthase; part of the gene cluster that mediates the biosynthesis of annullatin D, an alkylated aromatic polyketide with a fused dihydrobenzofuran lactone ring system that exhibits potent agonistic activities toward the cannabinoid receptors. The annullatin backbone 2-hydroxymethyl-3-pentylphenol is assembled from one acetyl-CoA starter unit and 5 malonyl-CoA elongation units by cooperation of the highly reducing polyketide synthase anuA, the short-chain dehydrogenase anuB and the oxidoreductase anuC, before being hydroxylated at the C-5 alkyl chain by the cytochrome P450 monooxygenase anuE to form (8S)-annullatin E. The prenyltransferase anuH subsequently installs one isoprenyl group at the benzene ring to form (8S)-annullatin J. Enzymatic or nonenzymatic dihydro-benzofuran ring formation between the prenyl and the phenolic hydroxyl groups in (8S)-annullatin J results in two diastereomers (2S,9S)-annullatin H and compound 12. The intermediate (2S,9S)-annullatin H is then converted to (2S,9S)-annullatin D by the FAD-linked oxidoreductase anuG-catalyzed five-member lactone ring formation. The isomer 12 acts as a substrate for the short-chain dehydrogenase anuF and is oxidized to (2R)-annullatin F, which is subsequently acetylated by an acetyltransferase leading to (2R)-annullatin G formation. The remaining enzymes identified within the cluster, anuD, anuI and anuJ, seem not to be involved in annullatin biosynthesis. This Penicillium roqueforti (strain FM164) protein is Short-chain dehydrogenase anuB.